A 665-amino-acid chain; its full sequence is DNA ligase (665 aa).

NAD(+) contacts are provided by residues 32–36 (DSEYD), 81–82 (SL), and glutamate 110. The N6-AMP-lysine intermediate role is filled by lysine 112. Residues arginine 133, glutamate 167, lysine 283, and lysine 307 each coordinate NAD(+). Residues cysteine 401, cysteine 404, cysteine 419, and cysteine 424 each contribute to the Zn(2+) site. Positions 586–665 (EGHPDFSGKT…AAFIEKQNGI (80 aa)) constitute a BRCT domain.

The protein belongs to the NAD-dependent DNA ligase family. LigA subfamily. Mg(2+) serves as cofactor. Requires Mn(2+) as cofactor.

It catalyses the reaction NAD(+) + (deoxyribonucleotide)n-3'-hydroxyl + 5'-phospho-(deoxyribonucleotide)m = (deoxyribonucleotide)n+m + AMP + beta-nicotinamide D-nucleotide.. In terms of biological role, DNA ligase that catalyzes the formation of phosphodiester linkages between 5'-phosphoryl and 3'-hydroxyl groups in double-stranded DNA using NAD as a coenzyme and as the energy source for the reaction. It is essential for DNA replication and repair of damaged DNA. This chain is DNA ligase, found in Staphylococcus epidermidis (strain ATCC 12228 / FDA PCI 1200).